The following is a 73-amino-acid chain: UPF0352 protein APJL_0577 (73 aa).

This sequence belongs to the UPF0352 family.

The sequence is that of UPF0352 protein APJL_0577 from Actinobacillus pleuropneumoniae serotype 3 (strain JL03).